The sequence spans 349 residues: Fructose-1,6-bisphosphatase class 1 (349 aa).

Residues glutamate 113, aspartate 135, isoleucine 137, and aspartate 138 each coordinate Mg(2+). Residues 138–141 (DGSS), asparagine 230, tyrosine 258, and lysine 288 each bind substrate. Glutamate 294 serves as a coordination point for Mg(2+).

This sequence belongs to the FBPase class 1 family. Homotetramer. Mg(2+) is required as a cofactor.

The protein localises to the cytoplasm. It catalyses the reaction beta-D-fructose 1,6-bisphosphate + H2O = beta-D-fructose 6-phosphate + phosphate. The protein operates within carbohydrate biosynthesis; Calvin cycle. The protein is Fructose-1,6-bisphosphatase class 1 of Trichormus variabilis (strain ATCC 29413 / PCC 7937) (Anabaena variabilis).